Consider the following 390-residue polypeptide: Heme chaperone HemW (390 aa).

The 240-residue stretch at 15–254 (PMPGQPFGVY…DARLSAAGFA (240 aa)) folds into the Radical SAM core domain. Tyr24 provides a ligand contact to S-adenosyl-L-methionine. Residues Cys30, Cys34, and Cys37 each coordinate [4Fe-4S] cluster. Residues Gly82, 83 to 84 (GT), Glu115, Gln142, Arg154, and Asp179 contribute to the S-adenosyl-L-methionine site.

It belongs to the anaerobic coproporphyrinogen-III oxidase family. HemW subfamily. Requires [4Fe-4S] cluster as cofactor.

It localises to the cytoplasm. Probably acts as a heme chaperone, transferring heme to an unknown acceptor. Binds one molecule of heme per monomer, possibly covalently. Binds 1 [4Fe-4S] cluster. The cluster is coordinated with 3 cysteines and an exchangeable S-adenosyl-L-methionine. This Mycobacterium tuberculosis (strain CDC 1551 / Oshkosh) protein is Heme chaperone HemW.